The chain runs to 218 residues: uncharacterized protein (218 aa).

This is an uncharacterized protein from Treponema pallidum (strain Nichols).